The following is a 304-amino-acid chain: tRNA dimethylallyltransferase (304 aa).

8–15 contacts ATP; it reads GPTASGKS. A substrate-binding site is contributed by 10–15; the sequence is TASGKS. An interaction with substrate tRNA region spans residues 33–36; the sequence is DSRQ.

The protein belongs to the IPP transferase family. In terms of assembly, monomer. Mg(2+) is required as a cofactor.

It catalyses the reaction adenosine(37) in tRNA + dimethylallyl diphosphate = N(6)-dimethylallyladenosine(37) in tRNA + diphosphate. Catalyzes the transfer of a dimethylallyl group onto the adenine at position 37 in tRNAs that read codons beginning with uridine, leading to the formation of N6-(dimethylallyl)adenosine (i(6)A). This Chlorobium luteolum (strain DSM 273 / BCRC 81028 / 2530) (Pelodictyon luteolum) protein is tRNA dimethylallyltransferase.